We begin with the raw amino-acid sequence, 301 residues long: Probable alpha-L-glutamate ligase 1 (301 aa).

One can recognise an ATP-grasp domain in the interval 104–287; sequence LQLLSRKGIG…VTEPIVEYIE (184 aa). ATP is bound by residues lysine 141, 178–179, aspartate 187, and 211–213; these read EY and RSN. Residues aspartate 248, glutamate 260, and asparagine 262 each contribute to the Mg(2+) site. Residues aspartate 248, glutamate 260, and asparagine 262 each contribute to the Mn(2+) site.

It belongs to the RimK family. Mg(2+) is required as a cofactor. Mn(2+) serves as cofactor.

This chain is Probable alpha-L-glutamate ligase 1, found in Shewanella sp. (strain MR-4).